A 419-amino-acid chain; its full sequence is UDP-N-acetylglucosamine 1-carboxyvinyltransferase (419 aa).

Position 22 to 23 (22 to 23 (KN)) interacts with phosphoenolpyruvate. A UDP-N-acetyl-alpha-D-glucosamine-binding site is contributed by arginine 95. Cysteine 119 serves as the catalytic Proton donor. Cysteine 119 is subject to 2-(S-cysteinyl)pyruvic acid O-phosphothioketal. Residues 164–167 (KVSV), aspartate 308, and isoleucine 330 contribute to the UDP-N-acetyl-alpha-D-glucosamine site.

This sequence belongs to the EPSP synthase family. MurA subfamily.

Its subcellular location is the cytoplasm. The enzyme catalyses phosphoenolpyruvate + UDP-N-acetyl-alpha-D-glucosamine = UDP-N-acetyl-3-O-(1-carboxyvinyl)-alpha-D-glucosamine + phosphate. The protein operates within cell wall biogenesis; peptidoglycan biosynthesis. In terms of biological role, cell wall formation. Adds enolpyruvyl to UDP-N-acetylglucosamine. The chain is UDP-N-acetylglucosamine 1-carboxyvinyltransferase from Rickettsia canadensis (strain McKiel).